A 168-amino-acid chain; its full sequence is Crossover junction endodeoxyribonuclease RuvC (168 aa).

Active-site residues include D7, E67, and H139. Mg(2+) contacts are provided by D7, E67, and H139.

Belongs to the RuvC family. Homodimer which binds Holliday junction (HJ) DNA. The HJ becomes 2-fold symmetrical on binding to RuvC with unstacked arms; it has a different conformation from HJ DNA in complex with RuvA. In the full resolvosome a probable DNA-RuvA(4)-RuvB(12)-RuvC(2) complex forms which resolves the HJ. The cofactor is Mg(2+).

Its subcellular location is the cytoplasm. It catalyses the reaction Endonucleolytic cleavage at a junction such as a reciprocal single-stranded crossover between two homologous DNA duplexes (Holliday junction).. Functionally, the RuvA-RuvB-RuvC complex processes Holliday junction (HJ) DNA during genetic recombination and DNA repair. Endonuclease that resolves HJ intermediates. Cleaves cruciform DNA by making single-stranded nicks across the HJ at symmetrical positions within the homologous arms, yielding a 5'-phosphate and a 3'-hydroxyl group; requires a central core of homology in the junction. The consensus cleavage sequence is 5'-(A/T)TT(C/G)-3'. Cleavage occurs on the 3'-side of the TT dinucleotide at the point of strand exchange. HJ branch migration catalyzed by RuvA-RuvB allows RuvC to scan DNA until it finds its consensus sequence, where it cleaves and resolves the cruciform DNA. The sequence is that of Crossover junction endodeoxyribonuclease RuvC from Deinococcus geothermalis (strain DSM 11300 / CIP 105573 / AG-3a).